The chain runs to 521 residues: U4/U6 small nuclear ribonucleoprotein Prp4 (521 aa).

Lys26 bears the N6-acetyllysine mark. WD repeat units lie at residues 228–267 (GDDR…LLHT), 270–317 (GHNT…PVAD), 320–359 (GHTV…EILH), 362–401 (GHSM…CIMF), 404–443 (GHLK…CVYT), 446–486 (AHQN…PLKT), and 489–521 (GHEG…WMAE).

In terms of assembly, component of the precatalytic spliceosome (spliceosome B complex). Component of the U4/U6-U5 tri-snRNP complex, a building block of the precatalytic spliceosome (spliceosome B complex). The U4/U6-U5 tri-snRNP complex is composed of the U4, U6 and U5 snRNAs and at least PRPF3, PRPF4, PRPF6, PRPF8, PRPF31, SNRNP200, TXNL4A, SNRNP40, SNRPB, SNRPD1, SNRPD2, SNRPD3, SNRPE, SNRPF, SNRPG, DDX23, CD2BP2, PPIH, SNU13, EFTUD2, SART1 and USP39, plus LSM2, LSM3, LSM4, LSM5, LSM6, LSM7 and LSM8. Interacts directly with PRPF18, PPIH and PRPF3. Part of a heteromeric complex containing PPIH, PRPF3 and PRPF4 that is stable in the absence of RNA. Interacts with ERCC6.

Its subcellular location is the nucleus. The protein resides in the nucleus speckle. In terms of biological role, plays a role in pre-mRNA splicing as component of the U4/U6-U5 tri-snRNP complex that is involved in spliceosome assembly, and as component of the precatalytic spliceosome (spliceosome B complex). This Pongo abelii (Sumatran orangutan) protein is U4/U6 small nuclear ribonucleoprotein Prp4 (PRPF4).